Reading from the N-terminus, the 523-residue chain is Bifunctional purine biosynthesis protein PurH (523 aa).

The region spanning 1–150 is the MGS-like domain; the sequence is MSDVVPVRNA…KNHGDVAIAT (150 aa).

The protein belongs to the PurH family.

It carries out the reaction (6R)-10-formyltetrahydrofolate + 5-amino-1-(5-phospho-beta-D-ribosyl)imidazole-4-carboxamide = 5-formamido-1-(5-phospho-D-ribosyl)imidazole-4-carboxamide + (6S)-5,6,7,8-tetrahydrofolate. The catalysed reaction is IMP + H2O = 5-formamido-1-(5-phospho-D-ribosyl)imidazole-4-carboxamide. It participates in purine metabolism; IMP biosynthesis via de novo pathway; 5-formamido-1-(5-phospho-D-ribosyl)imidazole-4-carboxamide from 5-amino-1-(5-phospho-D-ribosyl)imidazole-4-carboxamide (10-formyl THF route): step 1/1. Its pathway is purine metabolism; IMP biosynthesis via de novo pathway; IMP from 5-formamido-1-(5-phospho-D-ribosyl)imidazole-4-carboxamide: step 1/1. This chain is Bifunctional purine biosynthesis protein PurH, found in Rhodopirellula baltica (strain DSM 10527 / NCIMB 13988 / SH1).